Here is a 441-residue protein sequence, read N- to C-terminus: Ribosomal protein uS12 methylthiotransferase RimO (441 aa).

Positions 8–118 (PKIGFVSLGC…VLQHVHHYVP (111 aa)) constitute an MTTase N-terminal domain. Cys17, Cys53, Cys82, Cys150, Cys154, and Cys157 together coordinate [4Fe-4S] cluster. The Radical SAM core domain maps to 136-373 (LTPRHYAYLK…MQLQQQISAE (238 aa)). A TRAM domain is found at 376 to 441 (QEKVGREILV…DEYDLWGSRV (66 aa)).

The protein belongs to the methylthiotransferase family. RimO subfamily. [4Fe-4S] cluster serves as cofactor.

Its subcellular location is the cytoplasm. The enzyme catalyses L-aspartate(89)-[ribosomal protein uS12]-hydrogen + (sulfur carrier)-SH + AH2 + 2 S-adenosyl-L-methionine = 3-methylsulfanyl-L-aspartate(89)-[ribosomal protein uS12]-hydrogen + (sulfur carrier)-H + 5'-deoxyadenosine + L-methionine + A + S-adenosyl-L-homocysteine + 2 H(+). Its function is as follows. Catalyzes the methylthiolation of an aspartic acid residue of ribosomal protein uS12. This is Ribosomal protein uS12 methylthiotransferase RimO from Salmonella agona (strain SL483).